Here is a 366-residue protein sequence, read N- to C-terminus: Transmembrane protein 26 (366 aa).

The next 3 membrane-spanning stretches (helical) occupy residues 4–24 (LVLL…LVAV), 36–56 (YWLL…TLKF), and 64–84 (WLSP…WLLE). Residue Asn-110 is glycosylated (N-linked (GlcNAc...) asparagine). The next 5 helical transmembrane spans lie at 138 to 158 (MVCE…ILII), 176 to 196 (ELLL…TETL), 208 to 228 (VSGI…DLAV), 258 to 278 (IGLS…VLMI), and 282 to 302 (VINH…ALHF). The segment covering 319–329 (HPESPKPEHSG) has biased composition (basic and acidic residues). The disordered stretch occupies residues 319 to 366 (HPESPKPEHSGPDQPSESGPSEWEDASPEALPLRTSPVTSEESYPTTP). Positions 354-366 (SPVTSEESYPTTP) are enriched in polar residues.

The protein resides in the membrane. The polypeptide is Transmembrane protein 26 (Tmem26) (Mus musculus (Mouse)).